The sequence spans 441 residues: MLNLFDNFDQASFDFLRSQRTAQIKIPTVVINDDGFLPPEVESPIKYWGNYNVNKKPLYFDHLSLPRYWRILSTAAQGHIYDLDKKRADIIYQATDNTRQVKEVRWLNNNGKVSWIDHYNRYGYRFAQTYYRNEQPAWRKYYDKKNRVFLEWNLIAGDFFLDVDGGYHFPSLIELVKYYLQTRHFKLDHIFYNTLNQGLSVSLNLPADGSDTLFWHEPLSGDELPGNMKFLMENSTRTKHIIFQRYTDWQRIGANLKNNHVDFGFLGTIYPHPRANQLRPQALILTNSDEIVELSTLIKNLPNIKFHIAAVTEMSGKLLAYQQYENVELYPNVSSARVKQLIADCDIYLDINRQNEILDAVRGAFEQNMLIVGFDETLHEPQFVTPQNMFKVNEAQKMSKHIMAALLKPALMKELIDTQRQLASEVSVQDYQRMIGALQSE.

Belongs to the GtfB family. In terms of assembly, forms a heterotetramer with 2 subunits each of GtfA and GtfB. Part of the accessory SecA2/SecY2 protein translocation apparatus.

Its subcellular location is the cell membrane. It participates in protein modification; protein glycosylation. Functionally, required for polymorphic O-glycosylation of the serine-rich repeat protein (SRRP) in this bacteria. A stabilizing protein that is part of the accessory SecA2/SecY2 system specifically required to export serine-rich repeat cell wall proteins encoded in the same operon. The GtfA-GtfB complex adds GlcNAc from UDP-GlcNAc to the substrate protein, attaching the first sugar residue. Stabilizes the glycosylation activity of GtfA. Has no N-acetylglucosaminyl transferase activity on its own. The protein is UDP-N-acetylglucosamine--peptide N-acetylglucosaminyltransferase stabilizing protein GtfB of Limosilactobacillus reuteri subsp. suis (strain ATCC 53608 / LMG 31752 / 1063) (Lactobacillus reuteri).